A 251-amino-acid polypeptide reads, in one-letter code: Hydroxyacylglutathione hydrolase (251 aa).

7 residues coordinate Zn(2+): H53, H55, D57, H58, H110, D127, and H165.

It belongs to the metallo-beta-lactamase superfamily. Glyoxalase II family. Monomer. The cofactor is Zn(2+).

It catalyses the reaction an S-(2-hydroxyacyl)glutathione + H2O = a 2-hydroxy carboxylate + glutathione + H(+). It functions in the pathway secondary metabolite metabolism; methylglyoxal degradation; (R)-lactate from methylglyoxal: step 2/2. Thiolesterase that catalyzes the hydrolysis of S-D-lactoyl-glutathione to form glutathione and D-lactic acid. The chain is Hydroxyacylglutathione hydrolase from Escherichia coli O81 (strain ED1a).